We begin with the raw amino-acid sequence, 185 residues long: Transcription termination/antitermination protein NusG (185 aa).

In terms of domain architecture, KOW spans 134–162 (PGQMVRVIDGPFNDFDGLVEEVNYEKNRL).

The protein belongs to the NusG family.

Participates in transcription elongation, termination and antitermination. The chain is Transcription termination/antitermination protein NusG from Xylella fastidiosa (strain 9a5c).